Here is a 344-residue protein sequence, read N- to C-terminus: Polyhomeotic-like protein 2 (344 aa).

Positions 1-23 (MTSGNGSSPVPTAATGNRTQNGE) are enriched in polar residues. Positions 1 to 28 (MTSGNGSSPVPTAATGNRTQNGENKPPQ) are disordered. The HD1 motif lies at 25-53 (KPPQAVVKPQILTHFIEGFVIQEGAQPFP). The FCS-type zinc-finger motif lies at 114–148 (GDGDPPKLKCELCGRVDFEYKFKRSKRFCSMACAK). 4 residues coordinate Zn(2+): C123, C126, C142, and C146. Positions 165–269 (RSKLQKPTVA…LHSRDPIAMS (105 aa)) are disordered. The segment covering 173–183 (VAKHARRRSRK) has biased composition (basic residues). Residues 216 to 233 (KLSNSQEDSSRCSDNSSY) are compositionally biased toward polar residues. Over residues 234-248 (EEPLSPMSASSSLSR) the composition is skewed to low complexity. The SAM domain occupies 280-344 (WNVEDVYDFV…YARISMLKDS (65 aa)).

In terms of assembly, component of a PRC1-like complex.

It is found in the nucleus. Its function is as follows. Component of a Polycomb group (PcG) multiprotein PRC1-like complex, a complex class required to maintain the transcriptionally repressive state of many genes, including Hox genes, throughout development. PcG PRC1 complex acts via chromatin remodeling and modification of histones; it mediates monoubiquitination of histone H2A 'Lys-119', rendering chromatin heritably changed in its expressibility. The protein is Polyhomeotic-like protein 2 (phc2) of Xenopus laevis (African clawed frog).